Here is a 583-residue protein sequence, read N- to C-terminus: Putative fatty-acid--CoA ligase fadD25 (583 aa).

3 consecutive transmembrane segments (helical) span residues Tyr77 to Pro97, Val109 to Val129, and Phe229 to Ile249. Residues Ile353–Thr375 form a disordered region.

It belongs to the ATP-dependent AMP-binding enzyme family.

It localises to the cell membrane. The protein is Putative fatty-acid--CoA ligase fadD25 (fadD25) of Mycobacterium tuberculosis (strain CDC 1551 / Oshkosh).